The sequence spans 226 residues: uncharacterized protein (226 aa).

Residues 18–219 (LTIRNYTETD…YGVLMEWKNV (202 aa)) enclose the N-acetyltransferase domain.

It belongs to the acetyltransferase family.

This is an uncharacterized protein from Bacillus subtilis (strain 168).